A 167-amino-acid chain; its full sequence is Protein-export protein SecB (167 aa).

Belongs to the SecB family. As to quaternary structure, homotetramer, a dimer of dimers. One homotetramer interacts with 1 SecA dimer.

It is found in the cytoplasm. Functionally, one of the proteins required for the normal export of preproteins out of the cell cytoplasm. It is a molecular chaperone that binds to a subset of precursor proteins, maintaining them in a translocation-competent state. It also specifically binds to its receptor SecA. The chain is Protein-export protein SecB from Idiomarina loihiensis (strain ATCC BAA-735 / DSM 15497 / L2-TR).